The chain runs to 227 residues: 7-cyano-7-deazaguanine synthase (227 aa).

An ATP-binding site is contributed by 7–17 (LSGGLDSSTIL). 4 residues coordinate Zn(2+): Cys-191, Cys-199, Cys-202, and Cys-205.

It belongs to the QueC family. The cofactor is Zn(2+).

The enzyme catalyses 7-carboxy-7-deazaguanine + NH4(+) + ATP = 7-cyano-7-deazaguanine + ADP + phosphate + H2O + H(+). Its pathway is purine metabolism; 7-cyano-7-deazaguanine biosynthesis. Its function is as follows. Catalyzes the ATP-dependent conversion of 7-carboxy-7-deazaguanine (CDG) to 7-cyano-7-deazaguanine (preQ(0)). The polypeptide is 7-cyano-7-deazaguanine synthase (Trichormus variabilis (strain ATCC 29413 / PCC 7937) (Anabaena variabilis)).